The following is a 133-amino-acid chain: Small ribosomal subunit protein uS8 (133 aa).

Belongs to the universal ribosomal protein uS8 family. In terms of assembly, part of the 30S ribosomal subunit. Contacts proteins S5 and S12.

Its function is as follows. One of the primary rRNA binding proteins, it binds directly to 16S rRNA central domain where it helps coordinate assembly of the platform of the 30S subunit. This Nostoc punctiforme (strain ATCC 29133 / PCC 73102) protein is Small ribosomal subunit protein uS8.